The sequence spans 440 residues: Xaa-Pro dipeptidase (440 aa).

Mn(2+) is bound by residues Asp-244, Asp-255, His-335, Glu-380, and Glu-419.

It belongs to the peptidase M24B family. Bacterial-type prolidase subfamily. Mn(2+) serves as cofactor.

The enzyme catalyses Xaa-L-Pro dipeptide + H2O = an L-alpha-amino acid + L-proline. In terms of biological role, splits dipeptides with a prolyl residue in the C-terminal position. This is Xaa-Pro dipeptidase from Shewanella pealeana (strain ATCC 700345 / ANG-SQ1).